A 320-amino-acid chain; its full sequence is Cytochrome f (320 aa).

The N-terminal stretch at 1–35 (MQTINTFSWIKEQITRSISISLILYIITRSSIANA) is a signal peptide. Heme is bound by residues Tyr-36, Cys-56, Cys-59, and His-60. Residues 286 to 305 (IQGLLFFFASVILAQIFLVL) form a helical membrane-spanning segment.

Belongs to the cytochrome f family. In terms of assembly, the 4 large subunits of the cytochrome b6-f complex are cytochrome b6, subunit IV (17 kDa polypeptide, petD), cytochrome f and the Rieske protein, while the 4 small subunits are PetG, PetL, PetM and PetN. The complex functions as a dimer. It depends on heme as a cofactor.

It is found in the plastid. Its subcellular location is the chloroplast thylakoid membrane. Component of the cytochrome b6-f complex, which mediates electron transfer between photosystem II (PSII) and photosystem I (PSI), cyclic electron flow around PSI, and state transitions. The sequence is that of Cytochrome f (petA) from Spinacia oleracea (Spinach).